A 225-amino-acid chain; its full sequence is DNA repair and recombination protein RadB (225 aa).

This sequence belongs to the eukaryotic RecA-like protein family. RadB subfamily.

Functionally, involved in DNA repair and in homologous recombination. May regulate the cleavage reactions of the branch-structured DNA. Has a very weak ATPase activity that is not stimulated by DNA. Binds DNA but does not promote DNA strands exchange. This Methanococcoides burtonii (strain DSM 6242 / NBRC 107633 / OCM 468 / ACE-M) protein is DNA repair and recombination protein RadB.